The sequence spans 268 residues: MAEQTIAQALMLGVLEGFTEFIPVSSTGHILLAGHFLGFQSTGKAFEILIQLGAILAVLSVYAGRLWKMLIELPHEPATRRFVLGILIAFLPAAIIGVVAYQIIKTVLFETPLLICTMLILGGIVLLWVDRWAKKPLYRDITQFPLSVYLKIGLFQCLSMIPGTSRSGSTIVGALLLGVDKRAAAEFSFFLAMPTMAGAFAYDLYKNYHLLTAADLQIIGVGFIAAFVAAVLVVRSLLDFVSRRGYALFGWWRIFIGVLGLIGVLVLG.

7 consecutive transmembrane segments (helical) span residues 5–25 (TIAQ…IPVS), 43–63 (GKAF…SVYA), 84–104 (LGIL…YQII), 107–127 (VLFE…IVLL), 184–204 (AAEF…AYDL), 214–234 (ADLQ…VLVV), and 247–267 (ALFG…VLVL).

The protein belongs to the UppP family.

The protein localises to the cell inner membrane. It catalyses the reaction di-trans,octa-cis-undecaprenyl diphosphate + H2O = di-trans,octa-cis-undecaprenyl phosphate + phosphate + H(+). Catalyzes the dephosphorylation of undecaprenyl diphosphate (UPP). Confers resistance to bacitracin. The sequence is that of Undecaprenyl-diphosphatase from Chelativorans sp. (strain BNC1).